Reading from the N-terminus, the 838-residue chain is MDMSRRTLLKAQAAAAAAAVAGIDLPAEAQNLAAGEDIALKWSKAPCRFCGTGCGVMVGVKDGRVVATHGDMQAEVNRGLNCVKGYFLSKIMYGADRLTQPLMRVRGGKFDKNAELQPVSWDQAFDEMARQWKRVLREKGPKAVGMFGSGQWTIFEGYAATKLMRAGFRSNNLDPNARHCMASAAVGFIRTFGMDEPMGCYDDFEHADAFVLWGSNMAEMHPILWTRVIDRRLSAPHVRIATLSTYEHRTTELSDQSLIFQPGTDLAILNFVANYIIQNGAVNRDFVERHVNFRVANTDIGYGLRPEHVLEQRATHANEAAVSQPSNFDAYARMVGEYTLEKTEELTGVSKERLLTLAKTYADPKIRVMSLWTMGFNQHVRGVWANHLVYNIHLLTGKISEPGNSPFSLTGQPSACGTAREVGTFSHRLPADMQVNNPEHRKHAEEIWKLPPGLLNGEIGYHAVQQDRMLKDGKLNAYWIMCNNNLQTAPNTNTETYPGYRNPANFVVCSDPYPTVTAMAADVVLPTAMWVEKEGAYGNAERRTHMWRQLVNAPGDARSDLWQLMEFSKRFTTDEVWAQEILVAHPDYKGKSLFDVLWRNGSVDRFGLDEIAADHENFESKQFGFYVQKGLFEEYASFGRGHGHDLAPFDRYHEVRGLRWPVVDGKETRWRYREGHDPYVEKGAGWQFYGNPDRRAVVMAAPYEPPAEAPDQEYDLWLVTGRVLEHWHSGSMTMRVPELYRAFTGAVMFMHPDDAQKRGLRRGQEVRIISRRGEIRSRVETRGRNKMPPGRVFVPFFDASQLINKATLDATDPISKQTDFKKCAVKVIGVATAERGAE.

Residues 1–29 constitute a signal peptide (tat-type signal); sequence MDMSRRTLLKAQAAAAAAAVAGIDLPAEA. Positions 40-96 constitute a 4Fe-4S Mo/W bis-MGD-type domain; sequence LKWSKAPCRFCGTGCGVMVGVKDGRVVATHGDMQAEVNRGLNCVKGYFLSKIMYGAD. Residues cysteine 47, cysteine 50, cysteine 54, and cysteine 82 each contribute to the [4Fe-4S] cluster site. Mo-bis(molybdopterin guanine dinucleotide) contacts are provided by residues lysine 84, glutamine 151, asparagine 176, cysteine 180, 213–220, 244–248, 263–265, methionine 374, glutamine 378, asparagine 484, 510–511, lysine 533, aspartate 560, and 720–729; these read WGSNMAEM, STYEH, GTD, SD, and TGRVLEHWHS. Phenylalanine 796 lines the substrate pocket. Mo-bis(molybdopterin guanine dinucleotide) is bound by residues asparagine 804 and lysine 821.

The protein belongs to the prokaryotic molybdopterin-containing oxidoreductase family. NasA/NapA/NarB subfamily. Component of the periplasmic nitrate reductase NapAB complex composed of NapA and NapB. The cofactor is [4Fe-4S] cluster. Mo-bis(molybdopterin guanine dinucleotide) is required as a cofactor. Predicted to be exported by the Tat system. The position of the signal peptide cleavage has not been experimentally proven.

The protein localises to the periplasm. The catalysed reaction is 2 Fe(II)-[cytochrome] + nitrate + 2 H(+) = 2 Fe(III)-[cytochrome] + nitrite + H2O. Its function is as follows. Catalytic subunit of the periplasmic nitrate reductase complex NapAB. Receives electrons from NapB and catalyzes the reduction of nitrate to nitrite. The protein is Periplasmic nitrate reductase of Methylobacterium sp. (strain 4-46).